A 370-amino-acid polypeptide reads, in one-letter code: NADH-quinone oxidoreductase subunit D 2 (370 aa).

This sequence belongs to the complex I 49 kDa subunit family. As to quaternary structure, NDH-1 is composed of 14 different subunits. Subunits NuoB, C, D, E, F, and G constitute the peripheral sector of the complex.

The protein resides in the cell membrane. It carries out the reaction a quinone + NADH + 5 H(+)(in) = a quinol + NAD(+) + 4 H(+)(out). Its function is as follows. NDH-1 shuttles electrons from NADH, via FMN and iron-sulfur (Fe-S) centers, to quinones in the respiratory chain. The immediate electron acceptor for the enzyme in this species is believed to be ubiquinone. Couples the redox reaction to proton translocation (for every two electrons transferred, four hydrogen ions are translocated across the cytoplasmic membrane), and thus conserves the redox energy in a proton gradient. The protein is NADH-quinone oxidoreductase subunit D 2 of Herpetosiphon aurantiacus (strain ATCC 23779 / DSM 785 / 114-95).